Reading from the N-terminus, the 231-residue chain is Phosphoglycolate phosphatase (231 aa).

The Nucleophile role is filled by Asp-9. The Mg(2+) site is built by Asp-9 and Asp-11. Lys-154 contributes to the substrate binding site. Mg(2+) is bound by residues Asp-177 and Asp-181.

The protein belongs to the archaeal SPP-like hydrolase family. The cofactor is Mg(2+).

The enzyme catalyses 2-phosphoglycolate + H2O = glycolate + phosphate. Catalyzes the dephosphorylation of 2-phosphoglycolate. This chain is Phosphoglycolate phosphatase, found in Nitrosopumilus maritimus (strain SCM1).